Consider the following 367-residue polypeptide: Serine/threonine-protein kinase Sgk2 (367 aa).

A disordered region spans residues methionine 1–proline 28. Serine 10 is modified (phosphoserine). Polar residues predominate over residues arginine 15–proline 28. Positions phenylalanine 35 to phenylalanine 292 constitute a Protein kinase domain. ATP is bound by residues isoleucine 41–valine 49 and lysine 64. Residues lysine 68–asparagine 78 carry the Nuclear localization signal motif. The Proton acceptor role is filled by aspartate 159. The residue at position 193 (threonine 193) is a Phosphothreonine; by PDPK1. Residues serine 293–serine 367 enclose the AGC-kinase C-terminal domain. 2 positions are modified to phosphoserine: serine 334 and serine 356. Tyrosine 357 bears the Phosphotyrosine mark.

This sequence belongs to the protein kinase superfamily. AGC Ser/Thr protein kinase family. Activated by phosphorylation on Ser-356 by an unknown kinase (may be mTORC2 but not confirmed), transforming it into a substrate for PDPK1 which then phosphorylates it on Thr-193.

Its subcellular location is the cytoplasm. It is found in the nucleus. The enzyme catalyses L-seryl-[protein] + ATP = O-phospho-L-seryl-[protein] + ADP + H(+). The catalysed reaction is L-threonyl-[protein] + ATP = O-phospho-L-threonyl-[protein] + ADP + H(+). Its activity is regulated as follows. Two specific sites, one in the kinase domain (Thr-193) and the other in the C-terminal regulatory region (Ser-356), need to be phosphorylated for its full activation. Its function is as follows. Serine/threonine-protein kinase which is involved in the regulation of a wide variety of ion channels, membrane transporters, cell growth, survival and proliferation. Up-regulates Na(+) channels: SCNN1A/ENAC, K(+) channels: KCNA3/Kv1.3, KCNE1 and KCNQ1, amino acid transporter: SLC6A19, glutamate transporter: SLC1A6/EAAT4, glutamate receptors: GRIA1/GLUR1 and GRIK2/GLUR6, Na(+)/H(+) exchanger: SLC9A3/NHE3, and the Na(+)/K(+) ATPase. This chain is Serine/threonine-protein kinase Sgk2 (Sgk2), found in Mus musculus (Mouse).